Here is a 242-residue protein sequence, read N- to C-terminus: Probable septum site-determining protein MinC (242 aa).

This sequence belongs to the MinC family. In terms of assembly, interacts with MinD and FtsZ.

In terms of biological role, cell division inhibitor that blocks the formation of polar Z ring septums. Rapidly oscillates between the poles of the cell to destabilize FtsZ filaments that have formed before they mature into polar Z rings. Prevents FtsZ polymerization. The chain is Probable septum site-determining protein MinC from Buchnera aphidicola subsp. Schizaphis graminum (strain Sg).